The chain runs to 113 residues: Cytochrome c (113 aa).

A1 carries the N-acetylalanine modification. Residues C22, C25, and H26 each coordinate heme c. K80 carries the post-translational modification N6,N6,N6-trimethyllysine. M88 lines the heme c pocket. K94 is modified (N6,N6,N6-trimethyllysine).

This sequence belongs to the cytochrome c family. In terms of processing, binds 1 heme c group covalently per subunit.

The protein localises to the mitochondrion intermembrane space. Functionally, electron carrier protein. The oxidized form of the cytochrome c heme group can accept an electron from the heme group of the cytochrome c1 subunit of cytochrome reductase. Cytochrome c then transfers this electron to the cytochrome oxidase complex, the final protein carrier in the mitochondrial electron-transport chain. This is Cytochrome c from Ginkgo biloba (Ginkgo).